A 260-amino-acid chain; its full sequence is MKLNKIKVIVAGFRGKMGATAVQMILNAQNFELMALLGKKEEVSEAFGVPVFSRKEDLIGFDADIWLDLTAPEAAYKNTRFALENGFRPVVGTTGFTDDEVADLIKFSREKELGGLIAPNFALGAVLLMQFSKQAVKYFPDVEIIELHHDGKKDAPSGTAVKTAELMSEERLAHHQGAVDEKEALAGARGADLEGMRIHSVRLPGLVAHQEVIFGSKGEGLTLRHDSYDRSSFMTGIALGIRKVMTVSELKYGLEHFLDL.

12 to 17 (GFRGKM) provides a ligand contact to NAD(+). Lysine 40 contacts NADP(+). NAD(+)-binding positions include 92 to 94 (GTT) and 118 to 121 (APNF). Histidine 148 acts as the Proton donor/acceptor in catalysis. (S)-2,3,4,5-tetrahydrodipicolinate is bound at residue histidine 149. The Proton donor role is filled by lysine 152. 158–159 (GT) serves as a coordination point for (S)-2,3,4,5-tetrahydrodipicolinate.

This sequence belongs to the DapB family.

It localises to the cytoplasm. It catalyses the reaction (S)-2,3,4,5-tetrahydrodipicolinate + NAD(+) + H2O = (2S,4S)-4-hydroxy-2,3,4,5-tetrahydrodipicolinate + NADH + H(+). It carries out the reaction (S)-2,3,4,5-tetrahydrodipicolinate + NADP(+) + H2O = (2S,4S)-4-hydroxy-2,3,4,5-tetrahydrodipicolinate + NADPH + H(+). It functions in the pathway amino-acid biosynthesis; L-lysine biosynthesis via DAP pathway; (S)-tetrahydrodipicolinate from L-aspartate: step 4/4. Its function is as follows. Catalyzes the conversion of 4-hydroxy-tetrahydrodipicolinate (HTPA) to tetrahydrodipicolinate. In Lactococcus lactis subsp. lactis (strain IL1403) (Streptococcus lactis), this protein is 4-hydroxy-tetrahydrodipicolinate reductase.